The following is a 241-amino-acid chain: Uracil-DNA glycosylase (241 aa).

The active-site Proton acceptor is the aspartate 71. Residues 221 to 241 (ISPIDWSLPPRNELDTTSAGA) form a disordered region.

Belongs to the uracil-DNA glycosylase (UDG) superfamily. UNG family.

It is found in the cytoplasm. The enzyme catalyses Hydrolyzes single-stranded DNA or mismatched double-stranded DNA and polynucleotides, releasing free uracil.. Its function is as follows. Excises uracil residues from the DNA which can arise as a result of misincorporation of dUMP residues by DNA polymerase or due to deamination of cytosine. The chain is Uracil-DNA glycosylase from Xanthomonas oryzae pv. oryzae (strain MAFF 311018).